Consider the following 343-residue polypeptide: Dual oxidase maturation factor 1 (343 aa).

At 1–24 (MATLGHTFPFYAGPKPTFPMDTTL) the chain is on the extracellular side. Residues 25 to 45 (ASIIMIFLTALATFIVILPGI) traverse the membrane as a helical segment. The Cytoplasmic portion of the chain corresponds to 46-51 (RGKTRL). A helical transmembrane segment spans residues 52-72 (FWLLRVVTSLFIGAAILAVNF). Residues 73–183 (SSEWSVGQVS…RLAGHYTSAM (111 aa)) are Extracellular-facing. 3 N-linked (GlcNAc...) asparagine glycosylation sites follow: asparagine 84, asparagine 109, and asparagine 121. Residues 184-204 (LWVAFLCWLLANVMLSMPVLV) form a helical membrane-spanning segment. The Cytoplasmic portion of the chain corresponds to 205-206 (YG). A helical transmembrane segment spans residues 207–227 (GYMLLATGIFQLLALLFFSMA). Over 228–249 (TSLTSPCPLHLGASVLHTHHGP) the chain is Extracellular. Residues 250–270 (AFWITLTTGLLCVLLGLAMAV) form a helical membrane-spanning segment. Residues 271–343 (AHRMQPHRLK…AHPKDPDCAL (73 aa)) are Cytoplasmic-facing. The tract at residues 306–343 (RYRSMADSPKSQDIPLSEASSTKAYCKEAHPKDPDCAL) is disordered. A compositionally biased stretch (basic and acidic residues) spans 330 to 343 (YCKEAHPKDPDCAL).

It belongs to the DUOXA family. May interact with NUMB. In terms of tissue distribution, specifically expressed in thyroid gland. Also detected in esophagus.

It localises to the membrane. Functionally, may be required for the maturation and the transport from the endoplasmic reticulum to the plasma membrane of functional DUOX1. In Homo sapiens (Human), this protein is Dual oxidase maturation factor 1 (DUOXA1).